The chain runs to 290 residues: Pyridoxal kinase PdxY (290 aa).

Substrate is bound by residues S12 and 47–48; that span reads TQ. Residues D114, E151, K184, and 211–214 contribute to the ATP site; that span reads RPLL. D225 provides a ligand contact to substrate.

It belongs to the pyridoxine kinase family. PdxY subfamily. In terms of assembly, homodimer. Mg(2+) serves as cofactor.

The catalysed reaction is pyridoxal + ATP = pyridoxal 5'-phosphate + ADP + H(+). It functions in the pathway cofactor metabolism; pyridoxal 5'-phosphate salvage; pyridoxal 5'-phosphate from pyridoxal: step 1/1. In terms of biological role, pyridoxal kinase involved in the salvage pathway of pyridoxal 5'-phosphate (PLP). Catalyzes the phosphorylation of pyridoxal to PLP. The polypeptide is Pyridoxal kinase PdxY (Pseudomonas putida (strain GB-1)).